A 778-amino-acid polypeptide reads, in one-letter code: MLPRPLRLLLDTTPPGGVVLSSFRSRDPEEGGDPGGRAVGGGQEEEDEEEEEASVSVWDEEEDGATFTVTSRQYRPLDPLAPLPPPRSSRRLRAGTLEALVRHLLDARTAGADMMFTPALLATHRAFTSTPALFGLVADRLEALESHPPGELERTTGVAISVLSTWLASHPEDFGSEVKGQLDRLESFLLRTGYAAREGVVGGSADLIRNLRARVDPRAPDLPKPLALPGDSPADPTDVLVFLADHLAEQLTLLDAELFLNLIPSQCLGGLWGHRDRPGHSHLCPSVRATVTQFNKVAGAVVSSVLGATSIGEGPREVTVRPLRPPQRARLLEKWIRVAEECRLLRNFSSVYAVVSALQSSPIHRLRAAWGETTRDSLRVFSSLCQIFSEEDNYSQSRELLMQEVKPQPPVEPHSKKAPRSGFRGGGVVPYLGTFLKDLVMLDAASKDELENGYINFDKRRKEFAILSELLRLQKECRGYDLRPNSDIQQWLQGLQPLTEAQSHRVSCEVEPPGTSDSPAARTPRPTLVITQWTEVLGSVGGPTPLVSWDRPSVGGDEVPGTPAPLLTRLAQHMKWPSVSSLDSALESSPSLHSPADPGHLSPPASSPRPSRGHRRSASCGSPLSGNTGEGTSRSAGCGGGVSGPGSSDCRIIRVQMELGEDGSVYKSILVTSQDKAPSVISRVLKKNNRDSAVASEFELVQLLPGDRELTIPHSANVFYAMDGASHDFLLRQRRRPSAATPGSHSGPSASGTPPSEGGGGSFPRIKATGRKIARALF.

The segment covering 1–15 (MLPRPLRLLLDTTPP) has biased composition (low complexity). The disordered stretch occupies residues 1 to 59 (MLPRPLRLLLDTTPPGGVVLSSFRSRDPEEGGDPGGRAVGGGQEEEDEEEEEASVSVWD). Positions 33-42 (DPGGRAVGGG) are enriched in gly residues. The segment covering 43 to 59 (QEEEDEEEEEASVSVWD) has biased composition (acidic residues). The N-terminal Ras-GEF domain occupies 88–212 (SSRRLRAGTL…GSADLIRNLR (125 aa)). The 271-residue stretch at 243–513 (LADHLAEQLT…HRVSCEVEPP (271 aa)) folds into the Ras-GEF domain. Disordered regions lie at residues 503–524 (SHRV…ARTP), 541–564 (GGPT…GTPA), 581–647 (SLDS…GPGS), and 735–769 (RRPS…IKAT). Low complexity predominate over residues 581-592 (SLDSALESSPSL). A compositionally biased stretch (polar residues) spans 620–632 (CGSPLSGNTGEGT). Residues 649–736 (DCRIIRVQME…HDFLLRQRRR (88 aa)) form the Ras-associating domain. Residues 738 to 756 (SAATPGSHSGPSASGTPPS) show a composition bias toward low complexity.

Interacts with SAMD9.

In terms of biological role, probable guanine nucleotide exchange factor. Putative effector of Ras and/or Rap. Associates with the GTP-bound form of Rap 1A and H-Ras in vitro. This chain is Ral guanine nucleotide dissociation stimulator-like 2 (Rgl2), found in Mus musculus (Mouse).